Reading from the N-terminus, the 605-residue chain is Insulin-like growth factor-binding protein complex acid labile subunit (605 aa).

The first 27 residues, 1 to 27 (MALRKGGLALALLLLSWVALGPRSLEG), serve as a signal peptide directing secretion. Residues 32–74 (TPGEAEGPACPAACVCSYDDDADELSVFCSSRNLTRLPDGVPG) form the LRRNT domain. Cystine bridges form between Cys-41/Cys-47 and Cys-45/Cys-60. 3 N-linked (GlcNAc...) asparagine glycosylation sites follow: Asn-64, Asn-85, and Asn-96. LRR repeat units lie at residues 75-96 (GTQA…AFQN), 99-120 (SLGF…ALLG), 123-144 (NLCH…TFAH), 147-168 (ALAS…LFEG), 171-192 (SLWD…AFRG), 195-216 (SLRE…LFSG), 219-240 (ELRE…VFVQ), 243-264 (RLQK…AFLG), 267-288 (ALRW…TFPG), 291-312 (GLRV…TFKD), 315-336 (FLEE…SFEG), 339-360 (QLEV…AFLG), 363-384 (NVAV…VFRG), 387-408 (KLHS…TFTG), 411-432 (GLRR…SLWG), 435-456 (ELLE…LFQG), 459-480 (KLEY…ALGP), 483-504 (RAFW…LLAP), and 507-528 (RLRY…PPGL). Asn-368 carries an N-linked (GlcNAc...) asparagine glycan. An N-linked (GlcNAc...) asparagine glycan is attached at Asn-515. Residues 536 to 605 (NPWDCGCPLK…DLSEAHFAPC (70 aa)) enclose the LRRCT domain. 3 disulfides stabilise this stretch: Cys-540/Cys-583, Cys-542/Cys-605, and Cys-566/Cys-571. An N-linked (GlcNAc...) asparagine glycan is attached at Asn-580.

Forms a ternary complex with IGF1 and IGFBP3. In terms of tissue distribution, plasma.

Its subcellular location is the secreted. The protein localises to the extracellular space. Its function is as follows. Involved in protein-protein interactions that result in protein complexes, receptor-ligand binding or cell adhesion. The protein is Insulin-like growth factor-binding protein complex acid labile subunit (IGFALS) of Homo sapiens (Human).